Reading from the N-terminus, the 391-residue chain is D-xylose 1-dehydrogenase (NADP(+)) (391 aa).

It belongs to the Gfo/Idh/MocA family.

The catalysed reaction is D-xylose + NADP(+) = D-xylono-1,5-lactone + NADPH + H(+). Its function is as follows. NADP-dependent D-xylose dehydrogenase catalyzing the oxydation of D-xylose into D-xylonolactone. Also displays some, albeit lower activity with D-glucose, D-galactose and L-arabinose as substrate. Probably not involved in D-xylose degradation, as it has been shown that H.jecorina assimilates D-xylose via D-xylose reductase and xylitol dehydrogenase, and it is unable to grow on D-xylonic acid as sole carbon source. May play a role in the regeneration of NADP(+) in the presence of D-xylose. This Hypocrea jecorina (strain ATCC 56765 / BCRC 32924 / NRRL 11460 / Rut C-30) (Trichoderma reesei) protein is D-xylose 1-dehydrogenase (NADP(+)).